Here is a 662-residue protein sequence, read N- to C-terminus: Retaining alpha-galactosidase (662 aa).

The signal sequence occupies residues 1-19; sequence MKKLTFLLLCVLCTLSLQA. Residue E174 coordinates Ca(2+). The active-site Nucleophile is the D415. Ca(2+) contacts are provided by E464 and E470. E470 acts as the Proton donor/acceptor in catalysis.

Belongs to the glycosyl hydrolase 97 family. Monomer. The cofactor is Ca(2+).

It catalyses the reaction Hydrolysis of terminal, non-reducing alpha-D-galactose residues in alpha-D-galactosides, including galactose oligosaccharides, galactomannans and galactolipids.. Inhibited by EDTA in vitro. In terms of biological role, galactosidase that is able to hydrolyze the alpha-1,6 disaccharide melibiose and the synthetic p-nitrophenyl alpha-galactoside substrate (pNP-Gal), with retention of the anomeric configuration. Does not hydrolyze DNP-Glc or pNP-Glc. In Bacteroides thetaiotaomicron (strain ATCC 29148 / DSM 2079 / JCM 5827 / CCUG 10774 / NCTC 10582 / VPI-5482 / E50), this protein is Retaining alpha-galactosidase.